Consider the following 123-residue polypeptide: Putative EG45-like domain containing protein 1 (123 aa).

The first 21 residues, 1–21 (MSKSIVFFSTVLVFLFSFSYA), serve as a signal peptide directing secretion. The Expansin-like EG45 domain maps to 24 to 123 (GIATFYTSYT…AGIINIDYFP (100 aa)).

It is found in the secreted. In terms of biological role, might have a systemic role in water and solute homeostasis. The polypeptide is Putative EG45-like domain containing protein 1 (EGC1) (Arabidopsis thaliana (Mouse-ear cress)).